The sequence spans 346 residues: mRNA endoribonuclease LsoA (346 aa).

In terms of assembly, can form a complex with cognate antitoxin LsoB and with enterobacteria phage T4 antitoxin Dmd.

Functionally, toxic component of a type II toxin-antitoxin (TA) system. A stable (half-life over 20 minutes) endoribonuclease that degrades mRNA. Degradation may be translation-stimulated. Overexpression in the absence of cognate antitoxin LsoB causes retarded growth and mRNA degradation, this effect is mitigated upon coexpression with antitoxin LsoB or enterobacteria phage T4 Dmd. Degrades late enterobacteria phage T4 mRNAs, protecting the host against T4 reproduction. The sequence is that of mRNA endoribonuclease LsoA (lsoA) from Escherichia coli O157:H7.